The chain runs to 71 residues: DNA gyrase inhibitor YacG (71 aa).

4 residues coordinate Zn(2+): C7, C10, C26, and C30.

Belongs to the DNA gyrase inhibitor YacG family. As to quaternary structure, interacts with GyrB. It depends on Zn(2+) as a cofactor.

Inhibits all the catalytic activities of DNA gyrase by preventing its interaction with DNA. Acts by binding directly to the C-terminal domain of GyrB, which probably disrupts DNA binding by the gyrase. The chain is DNA gyrase inhibitor YacG from Shewanella amazonensis (strain ATCC BAA-1098 / SB2B).